We begin with the raw amino-acid sequence, 617 residues long: uncharacterized protein (617 aa).

The chain crosses the membrane as a helical span at residues 10-30; it reads AFFFFFVSLILLFLSPSYSDV. Residues 34–58 are disordered; that stretch reads ESDPIPYENSDASPGVVTSSESDRQ. Positions 43–53 are enriched in polar residues; it reads SDASPGVVTSS. A coiled-coil region spans residues 60 to 86; sequence VSLHRLEELVRNLTELVARLDAKLSET. Residues 473-493 form a helical membrane-spanning segment; the sequence is MLWSSPVFFFILFLFGAWHFF. Positions 511 to 529 are enriched in low complexity; sequence STTMSSSSTTTAQNSSAFS. A disordered region spans residues 511–617; that stretch reads STTMSSSSTT…GNNKALDDES (107 aa). Over residues 531–543 the composition is skewed to basic and acidic residues; that stretch reads STRRNDDHMDLRR. Residues 563–584 are compositionally biased toward polar residues; it reads VGSNDPSSRAPVETTNYRTTAQ. The span at 590 to 599 shows a compositional bias: gly residues; sequence GGSGLDSGGF.

It localises to the membrane. This is an uncharacterized protein from Arabidopsis thaliana (Mouse-ear cress).